The following is a 128-amino-acid chain: Small ribosomal subunit protein uS11 (128 aa).

It belongs to the universal ribosomal protein uS11 family. Part of the 30S ribosomal subunit. Interacts with proteins S7 and S18. Binds to IF-3.

In terms of biological role, located on the platform of the 30S subunit, it bridges several disparate RNA helices of the 16S rRNA. Forms part of the Shine-Dalgarno cleft in the 70S ribosome. The chain is Small ribosomal subunit protein uS11 from Onion yellows phytoplasma (strain OY-M).